We begin with the raw amino-acid sequence, 172 residues long: Small ribosomal subunit protein uS5 (172 aa).

One can recognise an S5 DRBM domain in the interval 17–80 (LREKMISVNR…EQARRNMFKV (64 aa)).

The protein belongs to the universal ribosomal protein uS5 family. Part of the 30S ribosomal subunit. Contacts proteins S4 and S8.

With S4 and S12 plays an important role in translational accuracy. Its function is as follows. Located at the back of the 30S subunit body where it stabilizes the conformation of the head with respect to the body. This chain is Small ribosomal subunit protein uS5, found in Burkholderia orbicola (strain AU 1054).